Here is a 220-residue protein sequence, read N- to C-terminus: Ribose-5-phosphate isomerase A (220 aa).

Substrate is bound by residues 28-31 (TGST), 81-84 (DGAD), and 94-97 (KGGG). The Proton acceptor role is filled by Glu-103. Lys-121 serves as a coordination point for substrate.

The protein belongs to the ribose 5-phosphate isomerase family. In terms of assembly, homodimer.

The catalysed reaction is aldehydo-D-ribose 5-phosphate = D-ribulose 5-phosphate. Its pathway is carbohydrate degradation; pentose phosphate pathway; D-ribose 5-phosphate from D-ribulose 5-phosphate (non-oxidative stage): step 1/1. Its function is as follows. Catalyzes the reversible conversion of ribose-5-phosphate to ribulose 5-phosphate. The chain is Ribose-5-phosphate isomerase A from Aromatoleum aromaticum (strain DSM 19018 / LMG 30748 / EbN1) (Azoarcus sp. (strain EbN1)).